The primary structure comprises 614 residues: UvrABC system protein C (614 aa).

A GIY-YIG domain is found at 26-104 (NLPGVYKMLG…IKEYRPPYNV (79 aa)). Residues 215-250 (SDIHTALIEKMEASAEELDFEKAVFYRDQLSMLREV) form the UVR domain.

It belongs to the UvrC family. In terms of assembly, interacts with UvrB in an incision complex.

It localises to the cytoplasm. In terms of biological role, the UvrABC repair system catalyzes the recognition and processing of DNA lesions. UvrC both incises the 5' and 3' sides of the lesion. The N-terminal half is responsible for the 3' incision and the C-terminal half is responsible for the 5' incision. This is UvrABC system protein C from Psychrobacter cryohalolentis (strain ATCC BAA-1226 / DSM 17306 / VKM B-2378 / K5).